The sequence spans 353 residues: Photosystem II protein D1 (353 aa).

Residue Thr-2 is modified to N-acetylthreonine. Position 2 is a phosphothreonine (Thr-2). Transmembrane regions (helical) follow at residues 29–46, 118–133, and 142–156; these read YIGW…TATS, HFLL…EWEL, and WIAV…AATA. His-118 lines the chlorophyll a pocket. A pheophytin a-binding site is contributed by Tyr-126. [CaMn4O5] cluster is bound by residues Asp-170 and Glu-189. Residues 197–218 form a helical membrane-spanning segment; that stretch reads FHMLGVAGVFGGSLFSAMHGSL. Position 198 (His-198) interacts with chlorophyll a. A quinone is bound by residues His-215 and 264–265; that span reads SF. His-215 provides a ligand contact to Fe cation. His-272 is a binding site for Fe cation. A helical membrane pass occupies residues 274-288; that stretch reads FLAAWPVVGIWFTAL. 4 residues coordinate [CaMn4O5] cluster: His-332, Glu-333, Asp-342, and Ala-344. The propeptide occupies 345-353; that stretch reads ALEVPSING.

Belongs to the reaction center PufL/M/PsbA/D family. As to quaternary structure, PSII is composed of 1 copy each of membrane proteins PsbA, PsbB, PsbC, PsbD, PsbE, PsbF, PsbH, PsbI, PsbJ, PsbK, PsbL, PsbM, PsbT, PsbX, PsbY, PsbZ, Psb30/Ycf12, at least 3 peripheral proteins of the oxygen-evolving complex and a large number of cofactors. It forms dimeric complexes. The D1/D2 heterodimer binds P680, chlorophylls that are the primary electron donor of PSII, and subsequent electron acceptors. It shares a non-heme iron and each subunit binds pheophytin, quinone, additional chlorophylls, carotenoids and lipids. D1 provides most of the ligands for the Mn4-Ca-O5 cluster of the oxygen-evolving complex (OEC). There is also a Cl(-1) ion associated with D1 and D2, which is required for oxygen evolution. The PSII complex binds additional chlorophylls, carotenoids and specific lipids. serves as cofactor. Post-translationally, tyr-161 forms a radical intermediate that is referred to as redox-active TyrZ, YZ or Y-Z. In terms of processing, C-terminally processed by CTPA; processing is essential to allow assembly of the oxygen-evolving complex and thus photosynthetic growth.

It localises to the plastid. Its subcellular location is the chloroplast thylakoid membrane. The catalysed reaction is 2 a plastoquinone + 4 hnu + 2 H2O = 2 a plastoquinol + O2. Its function is as follows. Photosystem II (PSII) is a light-driven water:plastoquinone oxidoreductase that uses light energy to abstract electrons from H(2)O, generating O(2) and a proton gradient subsequently used for ATP formation. It consists of a core antenna complex that captures photons, and an electron transfer chain that converts photonic excitation into a charge separation. The D1/D2 (PsbA/PsbD) reaction center heterodimer binds P680, the primary electron donor of PSII as well as several subsequent electron acceptors. The sequence is that of Photosystem II protein D1 from Agrostis stolonifera (Creeping bentgrass).